Here is a 356-residue protein sequence, read N- to C-terminus: Phosphoribosylformylglycinamidine cyclo-ligase (356 aa).

The protein belongs to the AIR synthase family.

The protein localises to the cytoplasm. It catalyses the reaction 2-formamido-N(1)-(5-O-phospho-beta-D-ribosyl)acetamidine + ATP = 5-amino-1-(5-phospho-beta-D-ribosyl)imidazole + ADP + phosphate + H(+). Its pathway is purine metabolism; IMP biosynthesis via de novo pathway; 5-amino-1-(5-phospho-D-ribosyl)imidazole from N(2)-formyl-N(1)-(5-phospho-D-ribosyl)glycinamide: step 2/2. The sequence is that of Phosphoribosylformylglycinamidine cyclo-ligase from Rhizobium meliloti (strain 1021) (Ensifer meliloti).